A 132-amino-acid chain; its full sequence is Fumarate reductase subunit C (132 aa).

Transmembrane regions (helical) follow at residues 30–50 (ATSV…LCFA), 70–90 (IVVF…VTYF), and 110–130 (VVRN…LVLV).

Belongs to the FrdC family. Part of an enzyme complex containing four subunits: a flavoprotein (FrdA), an iron-sulfur protein (FrdB), and two hydrophobic anchor proteins (FrdC and FrdD).

It is found in the cell inner membrane. Functionally, anchors the catalytic components of the fumarate reductase complex to the cell membrane, binds quinones. This is Fumarate reductase subunit C from Haemophilus influenzae (strain ATCC 51907 / DSM 11121 / KW20 / Rd).